The sequence spans 126 residues: Large ribosomal subunit protein bL19 (126 aa).

The protein belongs to the bacterial ribosomal protein bL19 family.

In terms of biological role, this protein is located at the 30S-50S ribosomal subunit interface and may play a role in the structure and function of the aminoacyl-tRNA binding site. The protein is Large ribosomal subunit protein bL19 of Gluconacetobacter diazotrophicus (strain ATCC 49037 / DSM 5601 / CCUG 37298 / CIP 103539 / LMG 7603 / PAl5).